We begin with the raw amino-acid sequence, 335 residues long: Tetraacyldisaccharide 4'-kinase (335 aa).

58–65 (TMGGAGKT) serves as a coordination point for ATP.

This sequence belongs to the LpxK family.

It catalyses the reaction a lipid A disaccharide + ATP = a lipid IVA + ADP + H(+). Its pathway is glycolipid biosynthesis; lipid IV(A) biosynthesis; lipid IV(A) from (3R)-3-hydroxytetradecanoyl-[acyl-carrier-protein] and UDP-N-acetyl-alpha-D-glucosamine: step 6/6. In terms of biological role, transfers the gamma-phosphate of ATP to the 4'-position of a tetraacyldisaccharide 1-phosphate intermediate (termed DS-1-P) to form tetraacyldisaccharide 1,4'-bis-phosphate (lipid IVA). This chain is Tetraacyldisaccharide 4'-kinase, found in Caulobacter vibrioides (strain ATCC 19089 / CIP 103742 / CB 15) (Caulobacter crescentus).